The primary structure comprises 865 residues: Protein translocase subunit SecA (865 aa).

ATP-binding positions include Gln-85, 103-107 (GEGKT), and Asp-505. Zn(2+) contacts are provided by Cys-847, Cys-849, Cys-858, and His-859.

Belongs to the SecA family. Monomer and homodimer. Part of the essential Sec protein translocation apparatus which comprises SecA, SecYEG and auxiliary proteins SecDF. Other proteins may also be involved. Zn(2+) is required as a cofactor.

The protein resides in the cell membrane. Its subcellular location is the cytoplasm. It catalyses the reaction ATP + H2O + cellular proteinSide 1 = ADP + phosphate + cellular proteinSide 2.. Its function is as follows. Part of the Sec protein translocase complex. Interacts with the SecYEG preprotein conducting channel. Has a central role in coupling the hydrolysis of ATP to the transfer of proteins into and across the cell membrane, serving as an ATP-driven molecular motor driving the stepwise translocation of polypeptide chains across the membrane. The protein is Protein translocase subunit SecA of Lactococcus lactis subsp. cremoris (strain SK11).